The chain runs to 852 residues: Disks large homolog 2 (852 aa).

S-palmitoyl cysteine attachment occurs at residues Cys-5 and Cys-7. Ser-28 carries the phosphoserine modification. Tyr-58 bears the Phosphotyrosine mark. Phosphoserine is present on Ser-65. 2 PDZ domains span residues 98–185 and 193–280; these read EITL…RRRR and EIKL…GKPT. Phosphoserine occurs at positions 307, 328, 360, 365, 406, and 414. The region spanning 421-502 is the PDZ 3 domain; sequence KVVLHKGSTG…TVTIIAQYQP (82 aa). Position 505 is a phosphotyrosine (Tyr-505). Phosphoserine occurs at positions 528, 530, and 553. The region spanning 536–606 is the SH3 domain; sequence KRSLYVRAMF…PSKRRVERKE (71 aa). The region spanning 662–837 is the Guanylate kinase-like domain; sequence TRPVIILGPM…IYNQCKLVIE (176 aa). Tyr-732 and Tyr-737 each carry phosphotyrosine.

Interacts with NOS1/nNOS through second PDZ domain. Interacts with KCNJ2/Kir2.1 (via C-terminus) through one of its PDZ domains. Interacts with KCNJ4. Interacts with FRMPD4 (via C-terminus). Interacts through its PDZ domains with NETO1. Interacts with LRFN1, LRFN2 and LRFN4. Interacts with FASLG. Interacts with KCNJ4. Interacts with ADAM22. Interacts with DGKI (via PDZ-binding motif). In terms of processing, palmitoylation of isoform 1 and isoform 2 is not required for targeting to postsynaptic density. As to expression, brain. Highest levels of isoform 1 in cortex, olfactory bulb, thalamus, hypothalamus, striatum and hippocampus. Highest level of isoform 2 in olfactory bulb. Reduced levels in cortex and hippocampus. Highest level of isoform 4 in spinal cord. Low levels of isoform 4, isoform 6, and isoform 7 in superior cervical ganglion.

The protein localises to the cell membrane. The protein resides in the postsynaptic density. It is found in the synapse. It localises to the membrane. Its subcellular location is the cell projection. The protein localises to the axon. The protein resides in the perikaryon. Its function is as follows. Required for perception of chronic pain through NMDA receptor signaling. Regulates surface expression of NMDA receptors in dorsal horn neurons of the spinal cord. Interacts with the cytoplasmic tail of NMDA receptor subunits as well as inward rectifying potassium channels. Involved in regulation of synaptic stability at cholinergic synapses. Part of the postsynaptic protein scaffold of excitatory synapses. This chain is Disks large homolog 2 (Dlg2), found in Mus musculus (Mouse).